Here is a 313-residue protein sequence, read N- to C-terminus: Porphobilinogen deaminase (313 aa).

S-(dipyrrolylmethanemethyl)cysteine is present on Cys-242.

Belongs to the HMBS family. Monomer. Dipyrromethane serves as cofactor.

It carries out the reaction 4 porphobilinogen + H2O = hydroxymethylbilane + 4 NH4(+). The protein operates within porphyrin-containing compound metabolism; protoporphyrin-IX biosynthesis; coproporphyrinogen-III from 5-aminolevulinate: step 2/4. Its function is as follows. Tetrapolymerization of the monopyrrole PBG into the hydroxymethylbilane pre-uroporphyrinogen in several discrete steps. The chain is Porphobilinogen deaminase from Escherichia coli O45:K1 (strain S88 / ExPEC).